Consider the following 89-residue polypeptide: Small ribosomal subunit protein uS15 (89 aa).

It belongs to the universal ribosomal protein uS15 family. In terms of assembly, part of the 30S ribosomal subunit. Forms a bridge to the 50S subunit in the 70S ribosome, contacting the 23S rRNA.

In terms of biological role, one of the primary rRNA binding proteins, it binds directly to 16S rRNA where it helps nucleate assembly of the platform of the 30S subunit by binding and bridging several RNA helices of the 16S rRNA. Functionally, forms an intersubunit bridge (bridge B4) with the 23S rRNA of the 50S subunit in the ribosome. This chain is Small ribosomal subunit protein uS15, found in Bartonella quintana (strain Toulouse) (Rochalimaea quintana).